The following is a 695-amino-acid chain: MAGILSKTLSEVHPSLRTNGMGIGNTHRRISLGFLPPNKKNPLVRKFRARTRNIDQRSFRSLTDDFGSNVHEPNPYLGNIDEEPDLYYHDEEDGELSRTISLPSRVSETPELSPQDVDWILHEHERRYSSVCNSDNEEASQSNTPDRIQEYSGRELEYDEFMNRLQAQKQKLTRSAVTDAKGTSHHRRPSFVSVTSRGSVPTIYQEIDENDSEALAELAHSHVTFKSEARVLASYSFPLIFTFLLEQIFPMVCSLTVGHLGKNELAAVSLASMTSNITLAIFEGIATSLDTLCPQAYGSGRFYSVGVHLQRCIAFSLVIYIPFAVMWWYSEPLLSYIIPEKELINLTSRFLRVLILGAPAYIFFENLKRFLQAQGIFDAGIYVLTICAPLNVLVSYTLVWNKYIGVGFIGAAIAVVLNFWLMFFLLLFYALYIDGRKCWGGFSRKAFTHWNDLGHLAFSGIIMLEAEELSYELLTLFSAYYGVSYLAAQSAVSTMAALLYMIPFAIGISTSTRIANFIGAKRTDFAHISSQVGLSFSFIAGFINCCILVFGRNLIANIYSKDPEVIKLIAQVLPLVGIVQNFDSLNAVAGSCLRGQGMQSLGSIVNLMAYYLFGIPLALILSWFFDMKLYGLWIGIGSAMLLIGLVEAYYVLFPDWDKIMTYAEILKETEDDEVDSDEYLTDSDDPDENTALLGA.

Ser113 carries the phosphoserine modification. 12 consecutive transmembrane segments (helical) span residues Phe237–Val257, Leu265–Ile285, Ile313–Leu333, Ile344–Phe364, Gly380–Trp400, Phe408–Phe428, Ala457–Phe477, Ala488–Ile508, Gln531–Gly551, Val565–Leu585, Ile604–Phe624, and Trp633–Phe653. The span at Glu673–Glu688 shows a compositional bias: acidic residues. A disordered region spans residues Glu673 to Ala695.

This sequence belongs to the multi antimicrobial extrusion (MATE) (TC 2.A.66.1) family.

It is found in the membrane. This is an uncharacterized protein from Saccharomyces cerevisiae (strain ATCC 204508 / S288c) (Baker's yeast).